Here is a 148-residue protein sequence, read N- to C-terminus: Putative pre-16S rRNA nuclease (148 aa).

This sequence belongs to the YqgF nuclease family.

It localises to the cytoplasm. Its function is as follows. Could be a nuclease involved in processing of the 5'-end of pre-16S rRNA. This Colwellia psychrerythraea (strain 34H / ATCC BAA-681) (Vibrio psychroerythus) protein is Putative pre-16S rRNA nuclease.